Here is a 350-residue protein sequence, read N- to C-terminus: Biotin synthase (350 aa).

In terms of domain architecture, Radical SAM core spans 38–256 (NYVQVSTLLS…IAIARIMMPQ (219 aa)). Cys-53, Cys-57, and Cys-60 together coordinate [4Fe-4S] cluster. The [2Fe-2S] cluster site is built by Cys-97, Cys-128, Cys-188, and Arg-260.

It belongs to the radical SAM superfamily. Biotin synthase family. Homodimer. [4Fe-4S] cluster is required as a cofactor. The cofactor is [2Fe-2S] cluster.

The catalysed reaction is (4R,5S)-dethiobiotin + (sulfur carrier)-SH + 2 reduced [2Fe-2S]-[ferredoxin] + 2 S-adenosyl-L-methionine = (sulfur carrier)-H + biotin + 2 5'-deoxyadenosine + 2 L-methionine + 2 oxidized [2Fe-2S]-[ferredoxin]. Its pathway is cofactor biosynthesis; biotin biosynthesis; biotin from 7,8-diaminononanoate: step 2/2. Its function is as follows. Catalyzes the conversion of dethiobiotin (DTB) to biotin by the insertion of a sulfur atom into dethiobiotin via a radical-based mechanism. The polypeptide is Biotin synthase (Vibrio campbellii (strain ATCC BAA-1116)).